Here is a 235-residue protein sequence, read N- to C-terminus: Octanoyltransferase (235 aa).

Residues 37–220 enclose the BPL/LPL catalytic domain; sequence AGGPDTLLLL…AVNDALDGWL (184 aa). Substrate is bound by residues 78–85, 150–152, and 163–165; these read RGGKITWH, AIG, and GFA. Residue cysteine 181 is the Acyl-thioester intermediate of the active site.

Belongs to the LipB family.

The protein localises to the cytoplasm. The enzyme catalyses octanoyl-[ACP] + L-lysyl-[protein] = N(6)-octanoyl-L-lysyl-[protein] + holo-[ACP] + H(+). Its pathway is protein modification; protein lipoylation via endogenous pathway; protein N(6)-(lipoyl)lysine from octanoyl-[acyl-carrier-protein]: step 1/2. Functionally, catalyzes the transfer of endogenously produced octanoic acid from octanoyl-acyl-carrier-protein onto the lipoyl domains of lipoate-dependent enzymes. Lipoyl-ACP can also act as a substrate although octanoyl-ACP is likely to be the physiological substrate. The polypeptide is Octanoyltransferase (Mycobacterium leprae (strain Br4923)).